The following is a 278-amino-acid chain: Formyltetrahydrofolate deformylase (278 aa).

One can recognise an ACT domain in the interval isoleucine 6–isoleucine 85. Aspartate 223 is an active-site residue.

Belongs to the PurU family.

The catalysed reaction is (6R)-10-formyltetrahydrofolate + H2O = (6S)-5,6,7,8-tetrahydrofolate + formate + H(+). The protein operates within purine metabolism; IMP biosynthesis via de novo pathway; formate from 10-formyl-5,6,7,8-tetrahydrofolate: step 1/1. Its function is as follows. Catalyzes the hydrolysis of 10-formyltetrahydrofolate (formyl-FH4) to formate and tetrahydrofolate (FH4). In Haemophilus influenzae (strain ATCC 51907 / DSM 11121 / KW20 / Rd), this protein is Formyltetrahydrofolate deformylase.